A 90-amino-acid polypeptide reads, in one-letter code: Putative toxin RelE1 (90 aa).

It belongs to the RelE toxin family.

Toxic component of a type II toxin-antitoxin (TA) system. Its cognate antitoxin is RelB1 (Potential). The protein is Putative toxin RelE1 (relE1) of Methanocaldococcus jannaschii (strain ATCC 43067 / DSM 2661 / JAL-1 / JCM 10045 / NBRC 100440) (Methanococcus jannaschii).